Here is a 361-residue protein sequence, read N- to C-terminus: Cytochrome c peroxidase, mitochondrial (361 aa).

A mitochondrion-targeting transit peptide spans 1-67 (MTTAVRLLPS…NWGKAAALAS (67 aa)). Catalysis depends on histidine 119, which acts as the Proton acceptor. A Phosphotyrosine modification is found at tyrosine 220. Histidine 242 is a heme b binding site. Tryptophan 258 acts as the Tryptophan radical intermediate in catalysis.

It belongs to the peroxidase family. Cytochrome c peroxidase subfamily. Forms a one-to-one complex with cytochrome c. It depends on heme b as a cofactor. CCP1 precursor is processed by the rhomboid protease PCP1, which cleaves the N-terminal hydrophobic transit peptide. The m-AAA protease (composed of YTA12/RCA1 and YTA10/AFG3) is required for CCP1 maturation: m-AAA protease promotes membrane dislocation of the CCP1 transmembrane segment within the transit peptide to ensure the correct positioning of CCP1 within the membrane bilayer, allowing intramembrane cleavage by PCP1.

It localises to the mitochondrion matrix. Its subcellular location is the mitochondrion intermembrane space. It catalyses the reaction 2 Fe(II)-[cytochrome c] + H2O2 + 2 H(+) = 2 Fe(III)-[cytochrome c] + 2 H2O. Destroys radicals which are normally produced within the cells and which are toxic to biological systems. The sequence is that of Cytochrome c peroxidase, mitochondrial (CCP1) from Saccharomyces cerevisiae (strain ATCC 204508 / S288c) (Baker's yeast).